The sequence spans 342 residues: S-adenosylmethionine:tRNA ribosyltransferase-isomerase (342 aa).

The protein belongs to the QueA family. In terms of assembly, monomer.

It localises to the cytoplasm. It catalyses the reaction 7-aminomethyl-7-carbaguanosine(34) in tRNA + S-adenosyl-L-methionine = epoxyqueuosine(34) in tRNA + adenine + L-methionine + 2 H(+). Its pathway is tRNA modification; tRNA-queuosine biosynthesis. In terms of biological role, transfers and isomerizes the ribose moiety from AdoMet to the 7-aminomethyl group of 7-deazaguanine (preQ1-tRNA) to give epoxyqueuosine (oQ-tRNA). In Listeria monocytogenes serotype 4b (strain F2365), this protein is S-adenosylmethionine:tRNA ribosyltransferase-isomerase.